The chain runs to 155 residues: SsrA-binding protein (155 aa).

Over residues 135–147 (TIKRRDQERDIKK) the composition is skewed to basic and acidic residues. Residues 135–155 (TIKRRDQERDIKKQMKHYNAR) form a disordered region.

The protein belongs to the SmpB family.

It localises to the cytoplasm. In terms of biological role, required for rescue of stalled ribosomes mediated by trans-translation. Binds to transfer-messenger RNA (tmRNA), required for stable association of tmRNA with ribosomes. tmRNA and SmpB together mimic tRNA shape, replacing the anticodon stem-loop with SmpB. tmRNA is encoded by the ssrA gene; the 2 termini fold to resemble tRNA(Ala) and it encodes a 'tag peptide', a short internal open reading frame. During trans-translation Ala-aminoacylated tmRNA acts like a tRNA, entering the A-site of stalled ribosomes, displacing the stalled mRNA. The ribosome then switches to translate the ORF on the tmRNA; the nascent peptide is terminated with the 'tag peptide' encoded by the tmRNA and targeted for degradation. The ribosome is freed to recommence translation, which seems to be the essential function of trans-translation. This is SsrA-binding protein from Streptococcus pyogenes serotype M6 (strain ATCC BAA-946 / MGAS10394).